We begin with the raw amino-acid sequence, 1012 residues long: Structural polyprotein (1012 aa).

Position 30 (aspartate 30) interacts with a divalent metal cation. In terms of domain architecture, Peptidase S50 spans alanine 513–alanine 755. Serine 652 (nucleophile) is an active-site residue. The active site involves lysine 692. Disordered stretches follow at residues glycine 837–arginine 857 and threonine 968–glutamate 1012. Basic residues predominate over residues arginine 975 to proline 986. The segment at isoleucine 1003 to glutamate 1012 is interaction with VP1 protein.

In terms of assembly, homotrimer. A central divalent metal stabilizes the VP2 trimer. Interacts with host ITGA4/ITGB1. As to quaternary structure, homodimer. Interacts (via C-terminus) with VP1 in the cytoplasm. Interacts with VP2. In terms of processing, specific enzymatic cleavages yield mature proteins. The capsid assembly seems to be regulated by polyprotein processing. The protease VP4 cleaves itself off the polyprotein, thus releasing pre-VP2 and VP3 within the infected cell. During capsid assembly, the C-terminus of pre-VP2 is further processed by VP4, giving rise to VP2, the external capsid protein and three small peptides that all stay closely associated with the capsid.

It localises to the virion. The protein localises to the host cytoplasm. Its function is as follows. Capsid protein VP2 self assembles to form an icosahedral capsid with a T=13 symmetry, about 70 nm in diameter, and consisting of 260 VP2 trimers. The capsid encapsulates the genomic dsRNA. VP2 is also involved in attachment and entry into the host cell by interacting with host ITGA4/ITGB1. The precursor of VP2 plays an important role in capsid assembly. First, pre-VP2 and VP2 oligomers assemble to form a procapsid. Then, the pre-VP2 intermediates may be processed into VP2 proteins by proteolytic cleavage mediated by VP4 to obtain the mature virion. The final capsid is composed of pentamers and hexamers but VP2 has a natural tendency to assemble into all-pentameric structures. Therefore pre-VP2 may be required to allow formation of the hexameric structures. In terms of biological role, protease VP4 is a serine protease that cleaves the polyprotein into its final products. Pre-VP2 is first partially cleaved, and may be completely processed by VP4 upon capsid maturation. Functionally, capsid protein VP3 plays a key role in virion assembly by providing a scaffold for the capsid made of VP2. May self-assemble to form a T=4-like icosahedral inner-capsid composed of at least 180 trimers. Plays a role in genomic RNA packaging by recruiting VP1 into the capsid and interacting with the dsRNA genome segments to form a ribonucleoprotein complex. Additionally, the interaction of the VP3 C-terminal tail with VP1 removes the inherent structural blockade of the polymerase active site. Thus, VP3 can also function as a transcriptional activator. Its function is as follows. Structural peptide 1 is a small peptide derived from pre-VP2 C-terminus. It destabilizes and perforates cell membranes, suggesting a role during entry. Structural peptide 2 is a small peptide derived from pVP2 C-terminus. It is not essential for the virus viability, but viral growth is affected when missing. In terms of biological role, structural peptide 3 is a small peptide derived from pVP2 C-terminus. It is not essential for the virus viability, but viral growth is affected when missing. Functionally, structural peptide 4 is a small peptide derived from pVP2 C-terminus. It is essential for the virus viability. This chain is Structural polyprotein, found in Gallus gallus (Chicken).